The sequence spans 1450 residues: Arf-GAP with Rho-GAP domain, ANK repeat and PH domain-containing protein 1 (1450 aa).

An SAM domain is found at 6-70 (DAALSVAEWL…LAGLLRAHTS (65 aa)). A required for interaction with SH3KBP1 region spans residues 81–90 (PVPMKRHIFR). Disordered regions lie at residues 89–144 (FRSP…LPPL) and 173–302 (TKEE…SSLS). Residues 92–102 (PPVPATPPEPL) show a composition bias toward pro residues. Over residues 190–199 (QSEEPLSTLP) the composition is skewed to low complexity. Residues 200 to 219 (QGPPQPPSPPPCPPEIPPKP) are compositionally biased toward pro residues. 2 stretches are compositionally biased toward acidic residues: residues 225 to 236 (EFDDSDYDEVPE) and 269 to 286 (EGEE…EDDH). Phosphoserine is present on S229. The residue at position 231 (Y231) is a Phosphotyrosine; by PTK6. The PH 1 domain occupies 327 to 419 (PVIKAGWLDK…WMQALQQAMA (93 aa)). The residue at position 354 (T354) is a Phosphothreonine. S428 bears the Phosphoserine mark. A phosphotyrosine mark is found at Y431 and Y504. The region spanning 440–529 (QPDRAGSLEL…WLEAMQGAIA (90 aa)) is the PH 2 domain. The Arf-GAP domain occupies 535–660 (SEVAERIWAA…RYHPLFGNQE (126 aa)). A C4-type zinc finger spans residues 550–576 (CADCGAPQPDWASINLCVVICKRCAGE). Position 738 is a phosphoserine (S738). Positions 743-850 (TVSHSGFLYK…WVKCIAKAFV (108 aa)) constitute a PH 3 domain. The 186-residue stretch at 954–1139 (ASMGDTLSEQ…DLINHYVVVF (186 aa)) folds into the Rho-GAP domain. The 90-residue stretch at 1172–1261 (GDFICTVYLE…SHLVVKKHQA (90 aa)) folds into the Ras-associating domain. The 123-residue stretch at 1274-1396 (GDTKHGMMKF…WFATFLFVQH (123 aa)) folds into the PH 4 domain. 2 positions are modified to phosphoserine: S1428 and S1435.

In terms of assembly, interacts with SH3KBP1/CIN85 (via SH3 domains). The interaction is independent of EGF and does not affect ARAP1 GTPase-activating activity but is involved in regulating ubiquitination and endocytic trafficking of EGFR. ARAP1 competes with E3 ubiquitin-protein ligase CBL for binding to SH3KBP1, preventing interaction of CBL with SH3KBP1; this is likely to regulate SH3KBP1-mediated internalization of EGFR. Interacts with TNFRSF10A. Phosphorylated by PTK6 following EGF stimulation which enhances EGFR signaling by delaying EGFR down-regulation; the interaction is mediated by the SH2 domain of PTK6. Phosphorylation promotes association with the Golgi apparatus and endosomes. Detected in heart, skeletal muscle, spleen, kidney, liver, placenta, lung, peripheral blood leukocytes, adrenal gland, bone marrow, brain, lymph node, mammary gland, prostate, spinal cord, stomach, thyroid and trachea.

It is found in the cytoplasm. The protein resides in the golgi apparatus. It localises to the trans-Golgi network. Its subcellular location is the golgi stack. The protein localises to the cell membrane. It is found in the endosome. The protein resides in the multivesicular body. It localises to the cell projection. Its subcellular location is the ruffle. The protein localises to the podosome. It is found in the early endosome. In terms of biological role, phosphatidylinositol 3,4,5-trisphosphate-dependent GTPase-activating protein that modulates actin cytoskeleton remodeling by regulating ARF and RHO family members. Activated by phosphatidylinositol 3,4,5-trisphosphate (PtdIns(3,4,5)P3) binding and, to a lesser extent, by phosphatidylinositol 3,4-bisphosphate (PtdIns(3,4)P2) binding. Has a preference for ARF1 and ARF5. Positively regulates the ring size of circular dorsal ruffles and promotes macropinocytosis. Acts as a bridging factor in osteoclasts to control actin and membrane dynamics. Regulates the condensing of osteoclast podosomes into sealing zones which segregate the bone-facing membrane from other membrane domains and are required for osteoclast resorption activity. Also regulates recruitment of the AP-3 complex to endosomal membranes and trafficking of lysosomal membrane proteins to the ruffled membrane border of osteoclasts to modulate bone resorption. Regulates the endocytic trafficking of EGFR. Regulates the incorporation of CD63 and CD9 into multivesicular bodies. Required in the retinal pigment epithelium (RPE) for photoreceptor survival due to its role in promoting RPE phagocytosis. The sequence is that of Arf-GAP with Rho-GAP domain, ANK repeat and PH domain-containing protein 1 (ARAP1) from Homo sapiens (Human).